A 137-amino-acid chain; its full sequence is Large-conductance mechanosensitive channel (137 aa).

2 consecutive transmembrane segments (helical) span residues 14–34 (VLDL…INSL) and 81–101 (GSFL…FLIV).

Belongs to the MscL family. As to quaternary structure, homopentamer.

Its subcellular location is the cell membrane. Its function is as follows. Channel that opens in response to stretch forces in the membrane lipid bilayer. May participate in the regulation of osmotic pressure changes within the cell. The sequence is that of Large-conductance mechanosensitive channel from Chloroflexus aggregans (strain MD-66 / DSM 9485).